Here is a 212-residue protein sequence, read N- to C-terminus: Protein-L-isoaspartate O-methyltransferase (212 aa).

Residue S62 is part of the active site.

The protein belongs to the methyltransferase superfamily. L-isoaspartyl/D-aspartyl protein methyltransferase family.

It localises to the cytoplasm. It carries out the reaction [protein]-L-isoaspartate + S-adenosyl-L-methionine = [protein]-L-isoaspartate alpha-methyl ester + S-adenosyl-L-homocysteine. Its function is as follows. Catalyzes the methyl esterification of L-isoaspartyl residues in peptides and proteins that result from spontaneous decomposition of normal L-aspartyl and L-asparaginyl residues. It plays a role in the repair and/or degradation of damaged proteins. The chain is Protein-L-isoaspartate O-methyltransferase from Pseudoalteromonas translucida (strain TAC 125).